A 249-amino-acid polypeptide reads, in one-letter code: NAD(P)H-quinone oxidoreductase subunit K 2 (249 aa).

[4Fe-4S] cluster-binding residues include cysteine 54, cysteine 55, cysteine 119, and cysteine 150.

This sequence belongs to the complex I 20 kDa subunit family. As to quaternary structure, NDH-1 can be composed of about 15 different subunits; different subcomplexes with different compositions have been identified which probably have different functions. It depends on [4Fe-4S] cluster as a cofactor.

The protein localises to the cell inner membrane. It carries out the reaction a plastoquinone + NADH + (n+1) H(+)(in) = a plastoquinol + NAD(+) + n H(+)(out). The catalysed reaction is a plastoquinone + NADPH + (n+1) H(+)(in) = a plastoquinol + NADP(+) + n H(+)(out). In terms of biological role, NDH-1 shuttles electrons from an unknown electron donor, via FMN and iron-sulfur (Fe-S) centers, to quinones in the respiratory and/or the photosynthetic chain. The immediate electron acceptor for the enzyme in this species is believed to be plastoquinone. Couples the redox reaction to proton translocation, and thus conserves the redox energy in a proton gradient. Cyanobacterial NDH-1 also plays a role in inorganic carbon-concentration. The protein is NAD(P)H-quinone oxidoreductase subunit K 2 of Gloeobacter violaceus (strain ATCC 29082 / PCC 7421).